A 439-amino-acid chain; its full sequence is Lipid-A-disaccharide synthase (439 aa).

The interval 1-35 is disordered; the sequence is MKEIGNRESGIVDGQRNGASVGSDPTALPIPHSPL.

The protein belongs to the LpxB family.

It carries out the reaction a lipid X + a UDP-2-N,3-O-bis[(3R)-3-hydroxyacyl]-alpha-D-glucosamine = a lipid A disaccharide + UDP + H(+). Its pathway is bacterial outer membrane biogenesis; LPS lipid A biosynthesis. In terms of biological role, condensation of UDP-2,3-diacylglucosamine and 2,3-diacylglucosamine-1-phosphate to form lipid A disaccharide, a precursor of lipid A, a phosphorylated glycolipid that anchors the lipopolysaccharide to the outer membrane of the cell. This Xanthomonas euvesicatoria pv. vesicatoria (strain 85-10) (Xanthomonas campestris pv. vesicatoria) protein is Lipid-A-disaccharide synthase.